Consider the following 476-residue polypeptide: Adenosylhomocysteinase (476 aa).

Thr67, Asp142, and Glu202 together coordinate substrate. 203–205 (TTT) serves as a coordination point for NAD(+). Substrate contacts are provided by Lys232 and Asp236. NAD(+) contacts are provided by residues Asn237, 266–271 (GYGDVG), Glu289, Asn324, 345–347 (IGH), and Asn390.

The protein belongs to the adenosylhomocysteinase family. It depends on NAD(+) as a cofactor.

It is found in the cytoplasm. The enzyme catalyses S-adenosyl-L-homocysteine + H2O = L-homocysteine + adenosine. Its pathway is amino-acid biosynthesis; L-homocysteine biosynthesis; L-homocysteine from S-adenosyl-L-homocysteine: step 1/1. Its function is as follows. May play a key role in the regulation of the intracellular concentration of adenosylhomocysteine. The polypeptide is Adenosylhomocysteinase (Prochlorococcus marinus (strain SARG / CCMP1375 / SS120)).